The chain runs to 319 residues: Cell surface A33 antigen (319 aa).

The first 21 residues, 1 to 21, serve as a signal peptide directing secretion; sequence MVGKMWPVLWTLCAVRVTVDA. The Ig-like V-type domain maps to 22 to 134; it reads ISVETPQDVL…LEGNTKSRVR (113 aa). The Extracellular portion of the chain corresponds to 22 to 235; sequence ISVETPQDVL…VAVRSPSMNV (214 aa). Cystine bridges form between C43–C117, C146–C222, and C162–C211. N-linked (GlcNAc...) asparagine glycosylation is found at N112, N200, and N223. The Ig-like C2-type domain occupies 140 to 227; sequence PPSKPECGIE…GTQFCNITVA (88 aa). Residues 236 to 256 traverse the membrane as a helical segment; sequence ALYVGIAVGVVAALIIIGIII. Over 257–319 the chain is Cytoplasmic; it reads YCCCCRGKDD…GRESPDHLDQ (63 aa). 2 stretches are compositionally biased toward basic and acidic residues: residues 267 to 295 and 303 to 319; these read NTED…SRER and QEEQ…HLDQ. Residues 267–319 form a disordered region; the sequence is NTEDKEDARPNREAYEEPPEQLRELSREREEEDDYRQEEQRSTGRESPDHLDQ.

Post-translationally, N-glycosylated, contains approximately 8 kDa of N-linked carbohydrate. Palmitoylated. Expressed in normal gastrointestinal epithelium and in 95% of colon cancers.

The protein localises to the membrane. May play a role in cell-cell recognition and signaling. The polypeptide is Cell surface A33 antigen (GPA33) (Homo sapiens (Human)).